Here is a 207-residue protein sequence, read N- to C-terminus: Large ribosomal subunit protein uL4 (207 aa).

Positions 45-78 (RQGTHAVKNRSAVRGGGRKPWRQKGTGRARQGSI) are disordered. The segment covering 60 to 71 (GGRKPWRQKGTG) has biased composition (basic residues).

Belongs to the universal ribosomal protein uL4 family. Part of the 50S ribosomal subunit.

Functionally, one of the primary rRNA binding proteins, this protein initially binds near the 5'-end of the 23S rRNA. It is important during the early stages of 50S assembly. It makes multiple contacts with different domains of the 23S rRNA in the assembled 50S subunit and ribosome. Its function is as follows. Forms part of the polypeptide exit tunnel. The protein is Large ribosomal subunit protein uL4 of Pediococcus pentosaceus (strain ATCC 25745 / CCUG 21536 / LMG 10740 / 183-1w).